The following is a 193-amino-acid chain: Leucyl/phenylalanyl-tRNA--protein transferase (193 aa).

Belongs to the L/F-transferase family.

Its subcellular location is the cytoplasm. It catalyses the reaction N-terminal L-lysyl-[protein] + L-leucyl-tRNA(Leu) = N-terminal L-leucyl-L-lysyl-[protein] + tRNA(Leu) + H(+). The enzyme catalyses N-terminal L-arginyl-[protein] + L-leucyl-tRNA(Leu) = N-terminal L-leucyl-L-arginyl-[protein] + tRNA(Leu) + H(+). It carries out the reaction L-phenylalanyl-tRNA(Phe) + an N-terminal L-alpha-aminoacyl-[protein] = an N-terminal L-phenylalanyl-L-alpha-aminoacyl-[protein] + tRNA(Phe). Its function is as follows. Functions in the N-end rule pathway of protein degradation where it conjugates Leu, Phe and, less efficiently, Met from aminoacyl-tRNAs to the N-termini of proteins containing an N-terminal arginine or lysine. This is Leucyl/phenylalanyl-tRNA--protein transferase from Akkermansia muciniphila (strain ATCC BAA-835 / DSM 22959 / JCM 33894 / BCRC 81048 / CCUG 64013 / CIP 107961 / Muc).